The primary structure comprises 519 residues: 6-phosphofructo-2-kinase/fructose-2,6-bisphosphatase 2 (519 aa).

Polar residues predominate over residues 1 to 17 (MSENSTFSTEDSCNSSY). The interval 1-22 (MSENSTFSTEDSCNSSYKPHAS) is disordered. N-acetylserine is present on Ser2. A 6-phosphofructo-2-kinase region spans residues 2-251 (SENSTFSTED…VYYLMNIHVH (250 aa)). Ser32 carries the post-translational modification Phosphoserine; by PKA. 48 to 56 (GLPARGKTY) is an ATP binding site. Residues Arg81 and Arg105 each contribute to the beta-D-fructose 6-phosphate site. Asp131 is a catalytic residue. Residues Thr133 and Arg139 each contribute to the beta-D-fructose 6-phosphate site. Cys161 is a catalytic residue. 170–175 (NILEVK) is an ATP binding site. Beta-D-fructose 6-phosphate-binding residues include Lys175, Arg196, and Tyr200. Positions 252 to 519 (PRTIYLCRHG…PKTQVSIPVV (268 aa)) are fructose-2,6-bisphosphatase. Position 259 (Arg259) interacts with beta-D-fructose 2,6-bisphosphate. The active-site Tele-phosphohistidine intermediate is His260. Beta-D-fructose 2,6-bisphosphate-binding residues include Asn266 and Gly272. The active-site Proton donor/acceptor is the Glu329. The beta-D-fructose 2,6-bisphosphate site is built by Tyr340, Arg354, Lys358, Tyr369, Gln395, and Arg399. 351-354 (FALR) provides a ligand contact to ATP. ATP contacts are provided by residues 395 to 399 (QAVMR) and Tyr431. A disordered region spans residues 448–493 (HRDKPTHNFPKSQTPVRMRRNSFTPLSSSNTIRRPRNYSVGSRPLK). Over residues 456–479 (FPKSQTPVRMRRNSFTPLSSSNTI) the composition is skewed to polar residues. The residue at position 469 (Ser469) is a Phosphoserine. Thr471 bears the Phosphothreonine mark. Residue Thr478 is modified to Phosphothreonine; by PKC. Phosphoserine occurs at positions 486 and 496. The tract at residues 500-519 (ALDMQEGADQPKTQVSIPVV) is disordered. Polar residues predominate over residues 510 to 519 (PKTQVSIPVV).

This sequence in the C-terminal section; belongs to the phosphoglycerate mutase family. As to quaternary structure, homodimer. Forms a heterodimer with PFKFB3. Phosphorylation by AMPK stimulates activity. In terms of tissue distribution, highest levels in kidney; also found in heart, brain, spleen, lung, liver, skeletal muscle and testis.

The catalysed reaction is beta-D-fructose 2,6-bisphosphate + H2O = beta-D-fructose 6-phosphate + phosphate. The enzyme catalyses beta-D-fructose 6-phosphate + ATP = beta-D-fructose 2,6-bisphosphate + ADP + H(+). Its activity is regulated as follows. Phosphorylation results in the activation of the kinase activity. Functionally, synthesis and degradation of fructose 2,6-bisphosphate. This Mus musculus (Mouse) protein is 6-phosphofructo-2-kinase/fructose-2,6-bisphosphatase 2 (Pfkfb2).